Reading from the N-terminus, the 183-residue chain is MREYKVVVLGSGGVGKSALTVQFVTGSFIEKYDPTIEDFYRKEIEVDSSPSVLEILDTAGTEQFASMRDLYIKNGQGFILVYSLVNQQSFQDIKPMRDQIIRVKRYERVPMILVGNKVDLEGEREVSYGEGKALAEEWSCPFMETSAKNKASVDELFAEIVRQMNYAAQPNGDEGCCSACVIL.

10–17 (GSGGVGKS) is a GTP binding site. An Effector region motif is present at residues 32–40 (YDPTIEDFY). GTP is bound by residues 57 to 61 (DTAGT) and 116 to 119 (NKVD). S-palmitoyl cysteine attachment occurs at residues Cys-176 and Cys-177. Cys-180 carries the cysteine methyl ester modification. Residue Cys-180 is the site of S-farnesyl cysteine attachment. The propeptide at 181-183 (VIL) is removed in mature form.

The protein belongs to the small GTPase superfamily. Ras family. As to quaternary structure, interacts (GTP-bound form) with RUNDC3A. Interacts with PLCE1. Interacts with ARHGAP29, SGSM1, SGSM2 and SGSM3. Interacts (GTP-bound form preferentially) with TNIK (via the CNH domain); the interaction is direct and recruits RAP2A to the E3 ubiquitin ligase NEDD4. Interacts with MINK1. Interacts (GTP-bound form preferentially) with MAP4K4. Interacts with cytoskeletal actin. Interacts with RGS14; the interaction is GTP-dependent. In terms of processing, ubiquitinated; undergoes 'Lys-63' monoubiquitination and diubiquitination by NEDD4. Multiple lysine residues are probably modified. Ubiquitination requires TNIK, prevents interaction with effectors and inactivates RAP2A. Ubiquitination by the ECS(RAB40B) complex leads to RAP2A localization to lamellipodia plasma membrane, activation, and regulation of sorting at early endosomes for recycling to the lamellipodia plasma membrane. Post-translationally, palmitoylated. Palmitoylation is required for association with recycling endosome membranes and activation of TNIK.

It localises to the midbody. The protein localises to the cell projection. Its subcellular location is the lamellipodium membrane. It is found in the golgi apparatus. The protein resides in the recycling endosome membrane. It localises to the lysosome. It carries out the reaction GTP + H2O = GDP + phosphate + H(+). With respect to regulation, activated by the guanine nucleotide-exchange factors RAPGEF3 and RAPGEF4 in a cAMP-dependent manner. Nucleotide exchange is also specifically stimulated by RAPGEF5, RASGEF1A and RASGEF1B. Small GTP-binding protein which cycles between a GDP-bound inactive and a GTP-bound active form. In its active form interacts with and regulates several effectors including MAP4K4, MINK1 and TNIK. Part of a signaling complex composed of NEDD4, RAP2A and TNIK which regulates neuronal dendrite extension and arborization during development. More generally, it is part of several signaling cascades and may regulate cytoskeletal rearrangements, cell migration, cell adhesion and cell spreading. This Sus scrofa (Pig) protein is Ras-related protein Rap-2a (RAP2A).